The following is a 190-amino-acid chain: ATP synthase subunit b (190 aa).

The helical transmembrane segment at 24–44 threads the bilayer; sequence IVGSLICFVVILFFFWKLVLP.

Belongs to the ATPase B chain family. F-type ATPases have 2 components, F(1) - the catalytic core - and F(0) - the membrane proton channel. F(1) has five subunits: alpha(3), beta(3), gamma(1), delta(1), epsilon(1). F(0) has three main subunits: a(1), b(2) and c(10-14). The alpha and beta chains form an alternating ring which encloses part of the gamma chain. F(1) is attached to F(0) by a central stalk formed by the gamma and epsilon chains, while a peripheral stalk is formed by the delta and b chains.

The protein resides in the cell membrane. F(1)F(0) ATP synthase produces ATP from ADP in the presence of a proton or sodium gradient. F-type ATPases consist of two structural domains, F(1) containing the extramembraneous catalytic core and F(0) containing the membrane proton channel, linked together by a central stalk and a peripheral stalk. During catalysis, ATP synthesis in the catalytic domain of F(1) is coupled via a rotary mechanism of the central stalk subunits to proton translocation. Functionally, component of the F(0) channel, it forms part of the peripheral stalk, linking F(1) to F(0). In Leifsonia xyli subsp. xyli (strain CTCB07), this protein is ATP synthase subunit b.